Here is a 571-residue protein sequence, read N- to C-terminus: Phosphoenolpyruvate-protein phosphotransferase (571 aa).

The active-site Tele-phosphohistidine intermediate is histidine 207. Arginine 312 and arginine 348 together coordinate phosphoenolpyruvate. Positions 435 and 459 each coordinate Mg(2+). Phosphoenolpyruvate is bound by residues 458 to 459 (ND) and arginine 469. Catalysis depends on cysteine 506, which acts as the Proton donor.

It belongs to the PEP-utilizing enzyme family. In terms of assembly, homodimer. Mg(2+) serves as cofactor.

The protein resides in the cytoplasm. The catalysed reaction is L-histidyl-[protein] + phosphoenolpyruvate = N(pros)-phospho-L-histidyl-[protein] + pyruvate. In terms of biological role, general (non sugar-specific) component of the phosphoenolpyruvate-dependent sugar phosphotransferase system (sugar PTS). This major carbohydrate active-transport system catalyzes the phosphorylation of incoming sugar substrates concomitantly with their translocation across the cell membrane. Enzyme I transfers the phosphoryl group from phosphoenolpyruvate (PEP) to the phosphoryl carrier protein (HPr). This is Phosphoenolpyruvate-protein phosphotransferase (ptsI) from Chlamydia trachomatis serovar D (strain ATCC VR-885 / DSM 19411 / UW-3/Cx).